The following is a 228-amino-acid chain: L-ribulose-5-phosphate 4-epimerase UlaF (228 aa).

Substrate is bound by residues 26–27, 43–44, and 72–73; these read GN, SG, and SS. 3 residues coordinate Zn(2+): aspartate 74, histidine 93, and histidine 95. Residue aspartate 118 is the Proton donor/acceptor of the active site. Histidine 167 lines the Zn(2+) pocket. The Proton donor/acceptor role is filled by tyrosine 225.

Belongs to the aldolase class II family. AraD/FucA subfamily. It depends on Zn(2+) as a cofactor.

The enzyme catalyses L-ribulose 5-phosphate = D-xylulose 5-phosphate. Its pathway is cofactor degradation; L-ascorbate degradation; D-xylulose 5-phosphate from L-ascorbate: step 4/4. In terms of biological role, catalyzes the isomerization of L-ribulose 5-phosphate to D-xylulose 5-phosphate. Is involved in the anaerobic L-ascorbate utilization. This is L-ribulose-5-phosphate 4-epimerase UlaF from Escherichia coli O6:K15:H31 (strain 536 / UPEC).